We begin with the raw amino-acid sequence, 142 residues long: Peptide methionine sulfoxide reductase MsrB (142 aa).

Residues 2–125 (LKKDKSELTD…NSAAIQFIPY (124 aa)) form the MsrB domain. Cys114 serves as the catalytic Nucleophile.

The protein belongs to the MsrB Met sulfoxide reductase family.

It catalyses the reaction L-methionyl-[protein] + [thioredoxin]-disulfide + H2O = L-methionyl-(R)-S-oxide-[protein] + [thioredoxin]-dithiol. The chain is Peptide methionine sulfoxide reductase MsrB from Staphylococcus aureus (strain bovine RF122 / ET3-1).